Here is a 500-residue protein sequence, read N- to C-terminus: Replication factor C large subunit (500 aa).

44–51 (GSPGVGKT) contributes to the ATP binding site. Residues 443–500 (HAADDLGASDGETTNASGTASSSGDDGDADGTTDGDGSDANDGNDDDDDGQAGLSDFV) form a disordered region. A compositionally biased stretch (low complexity) spans 455-466 (TTNASGTASSSG). Residues 467–492 (DDGDADGTTDGDGSDANDGNDDDDDG) are compositionally biased toward acidic residues.

Belongs to the activator 1 small subunits family. RfcL subfamily. In terms of assembly, heteromultimer composed of small subunits (RfcS) and large subunits (RfcL).

Functionally, part of the RFC clamp loader complex which loads the PCNA sliding clamp onto DNA. The chain is Replication factor C large subunit from Halorubrum lacusprofundi (strain ATCC 49239 / DSM 5036 / JCM 8891 / ACAM 34).